A 209-amino-acid polypeptide reads, in one-letter code: Guanylate kinase (209 aa).

Residues 10–189 (GLLLVLSAPS…AFSDLRSVVV (180 aa)) enclose the Guanylate kinase-like domain. ATP is bound at residue 17–24 (APSGAGKT).

This sequence belongs to the guanylate kinase family.

It is found in the cytoplasm. The catalysed reaction is GMP + ATP = GDP + ADP. Its function is as follows. Essential for recycling GMP and indirectly, cGMP. In Myxococcus xanthus (strain DK1622), this protein is Guanylate kinase.